The primary structure comprises 493 residues: Stage V sporulation protein AF (493 aa).

5 helical membrane-spanning segments follow: residues 296 to 316, 334 to 354, 363 to 383, 387 to 407, and 418 to 438; these read FFGI…VLQP, IPII…RMAA, TAMG…VGLF, VILY…YELS, and MILV…VLII.

Belongs to the GerABKA family.

The protein resides in the cell membrane. The polypeptide is Stage V sporulation protein AF (spoVAF) (Bacillus subtilis (strain 168)).